The primary structure comprises 226 residues: Peroxynitrite isomerase 2 (226 aa).

A GXWXGXG motif is present at residues 73–79 (GVWRGEG). 2 residues coordinate heme b: Lys189 and His216.

This sequence belongs to the nitrobindin family. In terms of assembly, homodimer. It depends on heme b as a cofactor.

It catalyses the reaction peroxynitrite = nitrate. It functions in the pathway nitrogen metabolism. In terms of biological role, heme-binding protein able to scavenge peroxynitrite and to protect free L-tyrosine against peroxynitrite-mediated nitration, by acting as a peroxynitrite isomerase that converts peroxynitrite to nitrate. Therefore, this protein likely plays a role in peroxynitrite sensing and in the detoxification of reactive nitrogen and oxygen species (RNS and ROS, respectively). Is able to bind nitric oxide (NO) in vitro, but may act as a sensor of peroxynitrite levels in vivo. In Mycobacterium bovis (strain ATCC BAA-935 / AF2122/97), this protein is Peroxynitrite isomerase 2.